We begin with the raw amino-acid sequence, 828 residues long: MQDRNLIDVNLTSEMKTSFIDYAMSVIVARALPDVRDGLKPVHRRILYGMNELGVTPDKPHKKSARITGDVMGKYHPHGDSSIYEAMVRMAQWWSYRHMLVDGHGNFGSMDGDGAAAQRYTEARMSKIALELLRDINKNTVNFQDNYDGSEREPVVLPARFPNLLVNGATGIAVGMATNIPPHNLAESIDAVKMVMEHPDCTTRELMEVIPGPDFPTGALVMGRSGIHRAYDTGKGSIVLRSRTEIETTQTGRERIVVTEFPYGVNKTKVHEHIVRLAQEKRLEGITAVRDESSREGVRFVIEIRREASATVILNNLFKLTSLQTNFSFNMLAIENGVPKILSLRQIIDNYISYQKEVIIRRTRFDKDKAEARAHILEGLLIALDHLDEVIAIIRNSETDVIAQTELMSRFDLSERQSQAILDMRLRRLTGLERDKIQSEYDDLLALIADLSDILAKPERIITIIKEEMDEIKRKYANPRRTELMVGEVLSLEDEDLIEEEDVLITLSNKGYIKRLAQDEFRAQKRGGRGVQGTGVNNDDFVRELVSTSTHDTLLFFTNFGRVYRLKAYEIPEYGRTAKGLPIVNLLKLEDGETIQTIINARKEETAGKSFFFTTKQGIVKRTEVSEFNNIRQNGLRALKLKEGDQLINVLLTSGQDDIIIGTHSGYSVRFNEASIRNMGRSATGVRGVKLREDDRVVGASRIRDNQEVLVITENGFGKRTSATDYPTKGRGGKGIKTANITPKNGQLAGLVTVDGTEDIMVITNKGVIIRTNVANISQTGRATLGVKIMKLDADAKIVTFTLVQPEDSSIAEINTDRENSISKNKDN.

Residues L32–L497 enclose the Topo IIA-type catalytic domain. Catalysis depends on Y120, which acts as the O-(5'-phospho-DNA)-tyrosine intermediate. The short motif at Q524–G530 is the GyrA-box element.

Belongs to the type II topoisomerase GyrA/ParC subunit family. In terms of assembly, heterotetramer, composed of two GyrA and two GyrB chains. In the heterotetramer, GyrA contains the active site tyrosine that forms a transient covalent intermediate with DNA, while GyrB binds cofactors and catalyzes ATP hydrolysis.

It is found in the cytoplasm. The catalysed reaction is ATP-dependent breakage, passage and rejoining of double-stranded DNA.. Functionally, a type II topoisomerase that negatively supercoils closed circular double-stranded (ds) DNA in an ATP-dependent manner to modulate DNA topology and maintain chromosomes in an underwound state. Negative supercoiling favors strand separation, and DNA replication, transcription, recombination and repair, all of which involve strand separation. Also able to catalyze the interconversion of other topological isomers of dsDNA rings, including catenanes and knotted rings. Type II topoisomerases break and join 2 DNA strands simultaneously in an ATP-dependent manner. The chain is DNA gyrase subunit A from Streptococcus pyogenes serotype M18 (strain MGAS8232).